A 550-amino-acid polypeptide reads, in one-letter code: Hydroxylamine reductase (550 aa).

Residues C3, C6, C18, and C25 each contribute to the [2Fe-2S] cluster site. Residues H249, E273, C317, C405, C433, C458, E492, and K494 each coordinate hybrid [4Fe-2O-2S] cluster. C405 is modified (cysteine persulfide).

This sequence belongs to the HCP family. It depends on [2Fe-2S] cluster as a cofactor. Requires hybrid [4Fe-2O-2S] cluster as cofactor.

The protein resides in the cytoplasm. It catalyses the reaction A + NH4(+) + H2O = hydroxylamine + AH2 + H(+). Functionally, catalyzes the reduction of hydroxylamine to form NH(3) and H(2)O. This Escherichia coli O6:H1 (strain CFT073 / ATCC 700928 / UPEC) protein is Hydroxylamine reductase.